Consider the following 120-residue polypeptide: Large ribosomal subunit protein uL24 (120 aa).

A disordered region spans residues 1–26 (MVRVISSQPRKQRKARYNAPHHMRGS). Positions 10 to 24 (RKQRKARYNAPHHMR) are enriched in basic residues.

The protein belongs to the universal ribosomal protein uL24 family. In terms of assembly, part of the 50S ribosomal subunit.

Functionally, one of two assembly initiator proteins, it binds directly to the 5'-end of the 23S rRNA, where it nucleates assembly of the 50S subunit. Its function is as follows. Located at the polypeptide exit tunnel on the outside of the subunit. This is Large ribosomal subunit protein uL24 from Methanospirillum hungatei JF-1 (strain ATCC 27890 / DSM 864 / NBRC 100397 / JF-1).